The primary structure comprises 349 residues: MPLPKRFRLNAKNYFLTYPQCSISKEERLAQLQNLSTPVNKKYIKICKESHEDGQPHLHVLIQFEGKYQCTNNRFFDLVSSTRSAHFHPNIQGAKSSSDVKTYIDKDGDTVEWGEFQIDGRSARGGQQSANDTYAKALNSASAEEALQIIKEEQPQHFFLQFHNIVSNANRIFQTPPEPWVPPFQQASFNNVPAIMTQWVSDNVCDAAARPMRPLSLVVEGPSRTGKTLWARSLGPHNYICGHMDLSPKIYSNNAWYNVIDDIPPHYVKHFKEFMGAQRDWQSNCKYGKPIQIKGGIPTIFLCNPGPQSSYKDYLSEEKNRSLNDWVQKNAIYVTIEEAIFTTGSQTSP.

Residues 8–116 (RLNAKNYFLT…DGDTVEWGEF (109 aa)) form the CRESS-DNA virus Rep endonuclease domain. The RCR-1 signature appears at 15–18 (FLTY). Residues E49, H57, and H59 each coordinate a divalent metal cation. Positions 57-59 (HLH) match the RCR-2 motif. Y103 serves as the catalytic For DNA cleavage activity. The short motif at 103–106 (YIDK) is the RCR-3 element. Residue D107 coordinates a divalent metal cation. Positions 143–153 (AEEALQIIKEE) are binding to RBR1. The segment at 156 to 176 (QHFFLQFHNIVSNANRIFQTP) is oligomerization. 221-228 (GPSRTGKT) provides a ligand contact to ATP.

It belongs to the geminiviridae Rep protein family. Homooligomer. Interacts with the replication enhancer protein (REn). Interacts with host retinoblastoma-related protein 1 (RBR1), and may thereby induce the transcription of host replicative enzymes even if the cell is not dividing anymore. Interacts with host PCNA. Interacts with host SCE1 protein. Mg(2+) serves as cofactor. Mn(2+) is required as a cofactor.

It localises to the host nucleus. Functionally, essential for the replication of viral ssDNA. The closed circular ssDNA genome is first converted to a superhelical dsDNA. Rep binds a specific region at the genome origin of replication. It introduces an endonucleolytic nick within the conserved sequence 5'-TAATATTAC-3' in the intergenic region of the genome present in all geminiviruses, thereby initiating the rolling circle replication (RCR). Following cleavage, binds covalently to the 5'-phosphate of DNA as a tyrosyl ester. The cleavage gives rise to a free 3'-OH that serves as a primer for the cellular DNA polymerase. The polymerase synthesizes the (+) strand DNA by rolling circle mechanism. After one round of replication, a Rep-catalyzed nucleotidyl transfer reaction releases a circular single-stranded virus genome, thereby terminating the replication. Displays origin-specific DNA cleavage, nucleotidyl transferase, ATPase and helicase activities. The protein is Replication-associated protein of Capsicum annuum (Capsicum pepper).